The chain runs to 687 residues: Glycine--tRNA ligase beta subunit (687 aa).

This sequence belongs to the class-II aminoacyl-tRNA synthetase family. Tetramer of two alpha and two beta subunits.

The protein localises to the cytoplasm. The enzyme catalyses tRNA(Gly) + glycine + ATP = glycyl-tRNA(Gly) + AMP + diphosphate. This Geobacter sulfurreducens (strain ATCC 51573 / DSM 12127 / PCA) protein is Glycine--tRNA ligase beta subunit.